The primary structure comprises 259 residues: Putative protein-tyrosine sulfotransferase (259 aa).

A disulfide bridge connects residues cysteine 13 and cysteine 68. Glutamate 16 (proton donor/acceptor) is an active-site residue. N-linked (GlcNAc...) asparagine glycosylation occurs at asparagine 36. Residues arginine 95, serine 103, and arginine 107 each coordinate 3'-phosphoadenylyl sulfate. A glycan (N-linked (GlcNAc...) asparagine) is linked at asparagine 115. Residues cysteine 137 and cysteine 144 are joined by a disulfide bond. Residues tyrosine 149 and 194 to 203 each bind 3'-phosphoadenylyl sulfate; that span reads SASQVKNSIN.

It belongs to the protein sulfotransferase family.

It catalyses the reaction L-tyrosyl-[protein] + 3'-phosphoadenylyl sulfate = O-sulfo-L-tyrosine-[protein] + adenosine 3',5'-bisphosphate + H(+). Functionally, catalyzes the O-sulfation of tyrosine residues within acidic motifs of polypeptides, using 3'-phosphoadenylyl sulfate (PAPS) as cosubstrate. This Caenorhabditis elegans protein is Putative protein-tyrosine sulfotransferase (tpst-2).